Reading from the N-terminus, the 926-residue chain is MASATVDFGIGRILSVLENETLLLSGVHGEIDKMKKELLIMKSFLEDTHKHGGNGSTTTTTQLFQTFVANTRDLAYQIEDILDEFGYHIHGYRSCAKIWRAFHFPRYMWARHSIAQKLGMVNVMIQSISDSMKRYYHSENYQAALLPPIDDGDAKWVNNISESSLFFSENSLVGIDAPKGKLIGRLLSPEPQRIVVAVVGMGGSGKTTLSANIFKSQSVRRHFESYAWVTISKSYVIEDVFRTMIKEFYKEADTQIPAELYSLGYRELVEKLVEYLQSKRYIVVLDDVWTTGLWREISIALPDGIYGSRVMMTTRDMNVASFPYGIGSTKHEIELLKEDEAWVLFSNKAFPASLEQCRTQNLEPIARKLVERCQGLPLAIASLGSMMSTKKFESEWKKVYSTLNWELNNNHELKIVRSIMFLSFNDLPYPLKRCFLYCSLFPVNYRMKRKRLIRMWMAQRFVEPIRGVKAEEVADSYLNELVYRNMLQVILWNPFGRPKAFKMHDVIWEIALSVSKLERFCDVYNDDSDGDDAAETMENYGSRHLCIQKEMTPDSIRATNLHSLLVCSSAKHKMELLPSLNLLRALDLEDSSISKLPDCLVTMFNLKYLNLSKTQVKELPKNFHKLVNLETLNTKHSKIEELPLGMWKLKKLRYLITFRRNEGHDSNWNYVLGTRVVPKIWQLKDLQVMDCFNAEDELIKNLGCMTQLTRISLVMVRREHGRDLCDSLNKIKRIRFLSLTSIDEEEPLEIDDLIATASIEKLFLAGKLERVPSWFNTLQNLTYLGLRGSQLQENAILSIQTLPRLVWLSFYNAYMGPRLRFAQGFQNLKILEIVQMKHLTEVVIEDGAMFELQKLYVRACRGLEYVPRGIENLINLQELHLIHVSNQLVERIRGEGSVDRSRVKHIPAIKHYFRTDNGSFYVSLSS.

The leucine-zipper stretch occupies residues 10–45; that stretch reads IGRILSVLENETLLLSGVHGEIDKMKKELLIMKSFL. Residues 153–467 form the NB-ARC domain; the sequence is DAKWVNNISE…AQRFVEPIRG (315 aa). An ATP-binding site is contributed by 200 to 207; that stretch reads GMGGSGKT. LRR repeat units follow at residues 561 to 580, 581 to 603, 605 to 625, 626 to 649, 686 to 707, 708 to 731, 756 to 777, 778 to 804, 825 to 836, 837 to 859, and 876 to 900; these read LHSLLVCSSAKHKMELLPSL, NLLRALDLEDSSISKLPDCLVTM, NLKYLNLSKTQVKELPKNFHK, LVNLETLNTKHSKIEELPLGMWKL, LQVMDCFNAEDELIKNLGCMTQ, LTRISLVMVRREHGRDLCDSLNKI, TASIEKLFLAGKLERVPSWFNT, LQNLTYLGLRGSQLQENAILSIQTLPR, FQNLKILEIVQM, KHLTEVVIEDGAMFELQKLYVRA, and LQELHLIHVSNQLVERIRGEGSVDR.

It belongs to the disease resistance NB-LRR family. In terms of assembly, interacts directly with RIN4 via its N-terminal region. Interacts (via N-terminus) with RIN2 and RIN3 (via C-terminus). Interacts with TIP49A, a protein known to interact with the TATA binding protein complex (TBP). Binds to MORC1/CRT1. Interacts, via its NB-ARC domain, with RIN13.

It is found in the endomembrane system. The protein localises to the cell membrane. Functionally, disease resistance (R) protein that specifically recognizes the AvrRpm1 type III effector avirulence protein from Pseudomonas syringae. Resistance proteins guard the plant against pathogens that contain an appropriate avirulence protein via an indirect interaction with this avirulence protein. That triggers a defense system including the hypersensitive response (HR), which restricts the pathogen growth. Acts via its interaction with RIN4, and probably triggers the plant resistance when RIN4 is phosphorylated by AvrRpm1. It is then degraded at the onset of the hypersensitive response. This chain is Disease resistance protein RPM1, found in Arabidopsis thaliana (Mouse-ear cress).